A 184-amino-acid polypeptide reads, in one-letter code: Probable RNA 2'-phosphotransferase (184 aa).

It belongs to the KptA/TPT1 family.

Its function is as follows. Removes the 2'-phosphate from RNA via an intermediate in which the phosphate is ADP-ribosylated by NAD followed by a presumed transesterification to release the RNA and generate ADP-ribose 1''-2''-cyclic phosphate (APPR&gt;P). May function as an ADP-ribosylase. The protein is Probable RNA 2'-phosphotransferase of Escherichia coli (strain 55989 / EAEC).